We begin with the raw amino-acid sequence, 1029 residues long: MGTKVSDDLVSTVRSVVGSDYSDMDIIRALHMANHDPTAAINIIFDTPSFAKPDVATPTPSGSNGGKRVDSGLKGCTFGDSGSVGANHRVEEENESVNGGGEESVSGNEWWFVGCSELAGLSTCKGRKLKSGDELVFTFPHSKGLKPETTPGKRGFGRGRPALRGASDIVRFSTKDSGEIGRIPNEWARCLLPLVRDKKIRIEGSCKSAPEALSIMDTILLSVSVYINSSMFQKHSATSFKTASNTAEESMFHPLPNLFRLLGLIPFKKAEFTPEDFYSKKRPLSSKDGSAIPTSLLQLNKVKNMNQDANGDENEQCISDGDLDNIVGVGDSSGLKEMETPHTLLCELRPYQKQALHWMTQLEKGNCTDEAATMLHPCWEAYCLADKRELVVYLNSFTGDATIHFPSTLQMARGGILADAMGLGKTVMTISLLLAHSWKAASTGFLCPNYEGDKVISSSVDDLTSPPVKATKFLGFDKRLLEQKSVLQNGGNLIVCPMTLLGQWKTEIEMHAKPGSLSVYVHYGQSRPKDAKLLSQSDVVITTYGVLTSEFSQENSADHEGIYAVRWFRIVLDEAHTIKNSKSQISLAAAALVADRRWCLTGTPIQNNLEDLYSLLRFLRIEPWGTWAWWNKLVQKPFEEGDERGLKLVQSILKPIMLRRTKSSTDREGRPILVLPPADARVIYCELSESERDFYDALFKRSKVKFDQFVEQGKVLHNYASILELLLRLRQCCDHPFLVMSRGDTAEYSDLNKLSKRFLSGKSSGLEREGKDVPSEAFVQEVVEELRKGEQGECPICLEALEDAVLTPCAHRLCRECLLASWRNSTSGLCPVCRNTVSKQELITAPTESRFQVDVEKNWVESSKITALLEELEGLRSSGSKSILFSQWTAFLDLLQIPLSRNNFSFVRLDGTLSQQQREKVLKEFSEDGSILVLLMSLKAGGVGINLTAASNAFVMDPWWNPAVEEQAVMRIHRIGQTKEVKIRRFIVKGTVEERMEAVQARKQRMISGALTDQEVRSARIEELKMLFT.

Residues 83-104 form a disordered region; the sequence is SVGANHRVEEENESVNGGGEES. One can recognise a Helicase ATP-binding domain in the interval 406-622; that stretch reads PSTLQMARGG…YSLLRFLRIE (217 aa). Position 419–426 (419–426) interacts with ATP; that stretch reads DAMGLGKT. A DEAH box motif is present at residues 573–576; it reads DEAH. Residues 794–834 form an RING-type zinc finger; sequence CPICLEALEDAVLTPCAHRLCRECLLASWRNSTSGLCPVCR. A Helicase C-terminal domain is found at 864–1029; that stretch reads KITALLEELE…RIEELKMLFT (166 aa).

This sequence belongs to the SNF2/RAD54 helicase family. RAD16 subfamily.

Its subcellular location is the nucleus. Its function is as follows. Functions in error-free postreplication DNA repair or DNA-damage tolerance (DTT) pathway. Required for homologous recombination (HR) induced by DNA double-strand break (DSB) in somatic cells. Required for damage-induced DNA repair, independently of MUS81 and RECQL4A. Plays a role in synthesis-dependent strand annealing (SDSA) but not in single-strand annealing (SSA). Possesses double-stranded DNA-dependent ATPase activity. Is able to regress replication forks with preference for forks with a leading strand gap. Is able to catalyze branch migration of Holliday junctions and is unaffected by protein blockades. The sequence is that of DNA repair protein RAD5A from Arabidopsis thaliana (Mouse-ear cress).